The primary structure comprises 404 residues: Zinc finger TRAF-type-containing protein 1 (404 aa).

Positions 1–13 (MSGAEEAGGGGPA) are enriched in gly residues. The disordered stretch occupies residues 1–22 (MSGAEEAGGGGPAAGPAGSVPA). The segment at 111-156 (CTVCLDLPKASVYQCTNGHLMCAGCFIHLLADARLKEEQATCPNCR) adopts an RING-type; degenerate zinc-finger fold. The segment at 152–225 (CPNCRCEISK…PWHGPFHELT (74 aa)) adopts a TRAF-type zinc-finger fold.

The protein belongs to the ZFTRAF1 family. As to quaternary structure, interacts with LGALS3.

It is found in the cytoplasm. Its subcellular location is the perinuclear region. The polypeptide is Zinc finger TRAF-type-containing protein 1 (Homo sapiens (Human)).